Reading from the N-terminus, the 263-residue chain is Acyl-[acyl-carrier-protein]--UDP-N-acetylglucosamine O-acyltransferase (263 aa).

Belongs to the transferase hexapeptide repeat family. LpxA subfamily. Homotrimer.

It localises to the cytoplasm. It carries out the reaction a (3R)-hydroxyacyl-[ACP] + UDP-N-acetyl-alpha-D-glucosamine = a UDP-3-O-[(3R)-3-hydroxyacyl]-N-acetyl-alpha-D-glucosamine + holo-[ACP]. The protein operates within glycolipid biosynthesis; lipid IV(A) biosynthesis; lipid IV(A) from (3R)-3-hydroxytetradecanoyl-[acyl-carrier-protein] and UDP-N-acetyl-alpha-D-glucosamine: step 1/6. Involved in the biosynthesis of lipid A, a phosphorylated glycolipid that anchors the lipopolysaccharide to the outer membrane of the cell. The protein is Acyl-[acyl-carrier-protein]--UDP-N-acetylglucosamine O-acyltransferase of Campylobacter jejuni subsp. jejuni serotype O:2 (strain ATCC 700819 / NCTC 11168).